A 455-amino-acid chain; its full sequence is tRNA modification GTPase MnmE (455 aa).

Residues Arg24, Glu81, and Lys120 each contribute to the (6S)-5-formyl-5,6,7,8-tetrahydrofolate site. The 163-residue stretch at 216–378 folds into the TrmE-type G domain; it reads GMTVVIAGRP…LREHLKACMG (163 aa). Asn226 provides a ligand contact to K(+). GTP contacts are provided by residues 226–231, 245–251, 270–273, 335–338, and 359–361; these read NAGKSS, TDIAGTT, DTAG, NKAD, and SAR. Ser230 lines the Mg(2+) pocket. K(+)-binding residues include Thr245, Ile247, and Thr250. Mg(2+) is bound at residue Thr251. Position 455 (Lys455) interacts with (6S)-5-formyl-5,6,7,8-tetrahydrofolate.

It belongs to the TRAFAC class TrmE-Era-EngA-EngB-Septin-like GTPase superfamily. TrmE GTPase family. As to quaternary structure, homodimer. Heterotetramer of two MnmE and two MnmG subunits. Requires K(+) as cofactor.

It localises to the cytoplasm. Functionally, exhibits a very high intrinsic GTPase hydrolysis rate. Involved in the addition of a carboxymethylaminomethyl (cmnm) group at the wobble position (U34) of certain tRNAs, forming tRNA-cmnm(5)s(2)U34. The protein is tRNA modification GTPase MnmE of Pseudomonas aeruginosa (strain ATCC 15692 / DSM 22644 / CIP 104116 / JCM 14847 / LMG 12228 / 1C / PRS 101 / PAO1).